We begin with the raw amino-acid sequence, 309 residues long: tRNA pseudouridine synthase B (309 aa).

The active-site Nucleophile is the aspartate 39.

This sequence belongs to the pseudouridine synthase TruB family. Type 1 subfamily.

The enzyme catalyses uridine(55) in tRNA = pseudouridine(55) in tRNA. Responsible for synthesis of pseudouridine from uracil-55 in the psi GC loop of transfer RNAs. The sequence is that of tRNA pseudouridine synthase B from Bacillus pumilus (strain SAFR-032).